The following is a 282-amino-acid chain: Elongation factor Ts (282 aa).

The interval 80-83 (TDFV) is involved in Mg(2+) ion dislocation from EF-Tu.

Belongs to the EF-Ts family.

The protein resides in the cytoplasm. Associates with the EF-Tu.GDP complex and induces the exchange of GDP to GTP. It remains bound to the aminoacyl-tRNA.EF-Tu.GTP complex up to the GTP hydrolysis stage on the ribosome. The protein is Elongation factor Ts (tsf) of Chlamydia pneumoniae (Chlamydophila pneumoniae).